Consider the following 183-residue polypeptide: (2E)-enoyl-[ACP] glycyltransferase (183 aa).

The protein belongs to the FcoT family.

It catalyses the reaction a (3R)-3-[(carboxymethyl)amino]fatty acid + holo-[ACP] + H(+) = a (2E)-enoyl-[ACP] + glycine + H2O. It carries out the reaction (3R)-3-[(carboxylmethyl)amino]decanoate + holo-[ACP] + H(+) = (2E)-decenoyl-[ACP] + glycine + H2O. The enzyme catalyses a fatty acyl-CoA + H2O = a fatty acid + CoA + H(+). Involved in the biosynthesis of a unique class of isonitrile lipopeptides (INLPs) that seem to play a role in metal acquisition. Catalyzes a Michael addition of glycine to the beta-position of an alpha,beta-unsaturated fatty acyl-[ACP], producing a (3R)-3-[(carboxymethyl)amino]fatty acid. Acts on the (2E)-decenoyl moiety loaded on the acyl-carrier protein (ACP) BQ2027_MB0103, forming the product (3R)-3-[(carboxymethyl)amino]decanoate released from the ACP. Displays thioesterase activity with a preference for long chain fatty acyl groups. The chain is (2E)-enoyl-[ACP] glycyltransferase from Mycobacterium bovis (strain ATCC BAA-935 / AF2122/97).